The sequence spans 152 residues: Arginine repressor (152 aa).

Belongs to the ArgR family.

It is found in the cytoplasm. It functions in the pathway amino-acid biosynthesis; L-arginine biosynthesis [regulation]. In terms of biological role, regulates arginine biosynthesis genes. The sequence is that of Arginine repressor from Thermotoga sp. (strain RQ2).